Here is a 218-residue protein sequence, read N- to C-terminus: Ras-related protein R-Ras (218 aa).

The segment at 1–30 (MSSGAASGTGRGRPRGGGPGPGDPPPSETH) is disordered. The span at 7–20 (SGTGRGRPRGGGPG) shows a compositional bias: gly residues. GTP is bound at residue 36-44 (GGGGVGKSA). An Effector region motif is present at residues 58–66 (YDPTIEDSY). GTP is bound by residues 83–87 (DTAGQ), 142–145 (NKAD), and 172–174 (SAK). At Cys215 the chain carries Cysteine methyl ester. Residue Cys215 is the site of S-geranylgeranyl cysteine attachment. A propeptide spans 216–218 (VLL) (removed in mature form).

The protein belongs to the small GTPase superfamily. Ras family. As to quaternary structure, interacts with PLCE1. Interacts (active GTP-bound form preferentially) with RGS14. Interacts with OSBPL3. Interacts with ZDHHC19. Post-translationally, S-palmitoylated by ZDHHC19, leading to increased association with membranes and with rafts/caveolae as well as enhanced cell viability.

The protein localises to the cell membrane. It carries out the reaction GTP + H2O = GDP + phosphate + H(+). GTP-binding protein with GTPase activity, likely involved in the regulation of MAPK signaling pathway and thereby controlling multiple cellular processes. Regulates the organization of the actin cytoskeleton. With OSPBL3, modulates integrin beta-1 (ITGB1) activity. This Homo sapiens (Human) protein is Ras-related protein R-Ras (RRAS).